The chain runs to 1211 residues: Transient receptor potential cation channel subfamily A member 1 homolog (1211 aa).

The Cytoplasmic segment spans residues 1–811; it reads MSKKSLGLDV…LKYKWNRLGR (811 aa). ANK repeat units lie at residues 49–79, 83–112, 116–169, 173–202, 206–235, 239–270, 277–306, 311–340, 344–374, 378–407, 411–440, 473–502, 506–535, 540–569, 573–602, 605–634, and 638–669; these read NLRS…AVNA, DFMT…LPNT, EGDT…EIDP, YQLT…DVDA, NKMT…NVTK, RLNT…AIKA, EKKT…KNSC, REKE…NKNE, VKAV…NIDV, QGLT…NLTI, DERT…KKNK, DQNT…SITQ, DEET…RLLL, MGNS…DKEA, YQKT…QIES, DTKT…TIDR, and EGKT…NLMI. A helical transmembrane segment spans residues 812–832; it reads PMYYFALFMYLVFIVSLTQYV. Residues 833–870 are Extracellular-facing; it reads RHTKAPYNVWNEESYYDSEYFDENETCPQINTTKPDVV. N-linked (GlcNAc...) asparagine glycans are attached at residues Asn856 and Asn863. The helical transmembrane segment at 871–891 threads the bilayer; it reads WKIIIQTLAVCQILVECFQLF. Residues 892–894 are Cytoplasmic-facing; the sequence is QRK. A helical transmembrane segment spans residues 895–915; it reads FAYLVNWENWIDCFIYSTALI. Over 916-932 the chain is Extracellular; it reads TVYDFSECSATSGVRQN. The chain crosses the membrane as a helical span at residues 933 to 953; it reads WQWILAALCIFFGWINLLFMI. Residues 954 to 975 are Cytoplasmic-facing; it reads RKMPRFGIFVVMFVDIVKTFFR. A helical transmembrane segment spans residues 976-996; that stretch reads FFPVFVLFIIAFSSSFYVILQ. Residues 997–1004 are Extracellular-facing; sequence NRPEFSTI. The pore-forming intramembrane region spans 1005–1025; the sequence is FMSPLKTTVMMIGEFEFTGIF. Residues 1026-1048 are Extracellular-facing; sequence HGDETTHAEKMFGPAHTAVACAL. The chain crosses the membrane as a helical span at residues 1049 to 1069; the sequence is FFFFCIIMTILLMNLLVGLAV. The Cytoplasmic portion of the chain corresponds to 1070 to 1193; sequence DDIKGVQEKA…EKQVRLEAII (124 aa). A coiled-coil region spans residues 1149–1191; the sequence is EMYEREAEFTSEMTQKLQNQAAKLKNIQENIDVMYEKQVRLEA.

The protein belongs to the transient receptor (TC 1.A.4) family. Homotetramer. As to expression, expressed in many sensory neurons, including OLQ and IL1 neurons.

It localises to the cell membrane. Functionally, receptor-activated non-selective cation channel involved in the nose-touch response and foraging behavior. Contributes to the neural responses of sensory neurons to touch, particularly after repeated mechanical stimulation. Has no apparent role in thermosensory or chemosensory behaviors. This chain is Transient receptor potential cation channel subfamily A member 1 homolog (trpa-1), found in Caenorhabditis elegans.